We begin with the raw amino-acid sequence, 139 residues long: Putative nickel-responsive regulator (139 aa).

His79, His90, His92, and Cys98 together coordinate Ni(2+).

Belongs to the transcriptional regulatory CopG/NikR family. Ni(2+) is required as a cofactor.

Transcriptional regulator. This is Putative nickel-responsive regulator from Nitratidesulfovibrio vulgaris (strain DSM 19637 / Miyazaki F) (Desulfovibrio vulgaris).